A 293-amino-acid polypeptide reads, in one-letter code: Protease HtpX (293 aa).

The next 2 membrane-spanning stretches (helical) occupy residues 4–24 and 38–58; these read IGLFLLTNLAVLVVAGVVLSL and LTNLLIFCAVFGFVGSFISLF. His-145 serves as a coordination point for Zn(2+). Glu-146 is a catalytic residue. His-149 contributes to the Zn(2+) binding site. 2 helical membrane-spanning segments follow: residues 156-176 and 193-213; these read ITLSLIQGVVNTFVMFFARII and IAFFITTIVAELVLGILASMI. Position 222 (Glu-222) interacts with Zn(2+).

This sequence belongs to the peptidase M48B family. Zn(2+) is required as a cofactor.

It localises to the cell inner membrane. The sequence is that of Protease HtpX from Cellvibrio japonicus (strain Ueda107) (Pseudomonas fluorescens subsp. cellulosa).